The following is a 417-amino-acid chain: Cobalamin binding intrinsic factor (417 aa).

The signal sequence occupies residues 1–18 (MAWLTLYLLSVLWAVAGT). Disulfide bonds link Cys-26/Cys-246, Cys-103/Cys-288, and Cys-143/Cys-182. Asp-171 serves as a coordination point for cob(II)alamin. Ser-191 is modified (phosphoserine). Residues Asp-222 and Gln-270 each contribute to the cob(II)alamin site. 2 N-linked (GlcNAc...) asparagine glycosylation sites follow: Asn-311 and Asn-330. Residues 365–370 (SWGLIV) and 386–395 (WEFLSGKTPL) contribute to the cob(II)alamin site. Asn-413 is a glycosylation site (N-linked (GlcNAc...) asparagine).

This sequence belongs to the eukaryotic cobalamin transport proteins family. As to quaternary structure, interacts with CUBN (via CUB domains). As to expression, gastric mucosa.

The protein resides in the secreted. Functionally, promotes absorption of the essential vitamin cobalamin (Cbl) in the ileum. After interaction with CUBN, the CBLIF-cobalamin complex is internalized via receptor-mediated endocytosis. This is Cobalamin binding intrinsic factor (Cblif) from Mus musculus (Mouse).